Here is a 122-residue protein sequence, read N- to C-terminus: Basic phospholipase A2 homolog myotoxin II (122 aa).

Cystine bridges form between Cys-26–Cys-116, Cys-28–Cys-44, Cys-43–Cys-95, Cys-49–Cys-122, Cys-50–Cys-88, Cys-57–Cys-81, and Cys-75–Cys-86. The important for membrane-damaging activities in eukaryotes and bacteria; heparin-binding stretch occupies residues 105 to 118 (KKYRYNYLKPFCKK).

Belongs to the phospholipase A2 family. Group II subfamily. K49 sub-subfamily. As to quaternary structure, homodimer; non-covalently linked (probable alternative/compact dimer conformation). Expressed by the venom gland.

Its subcellular location is the secreted. Its activity is regulated as follows. Myotoxic activity is inhibited by suramin and rosmarinic acid. Cytotoxic and myotoxic activities are inhibited by pre-incubation with varespladib. Suramin inhibits this myotoxin by (i) direct blockage of the MDoS and MDiS, preventing the toxin/membrane interaction and disruption and (ii) formation of an oligomeric complex, resulting in a tetrameric configuration for which both MDoS and MDiS becomes physically inaccessible, thus avoiding any possibility of toxin-membrane interaction or disruption. Heparin completely inhibits the cytotoxic and bactericidal activities, but only partially the myotoxic, edema-inducing and lethal effects. Functionally, snake venom phospholipase A2 (PLA2) homolog that lacks enzymatic activity. Shows high myotoxin activities. Also shows neurotoxicity, since it induces muscle paralysis when tested on mouse phrenic-diaphragm preparations. Displays edema-inducing activities. Also displays antimicrobial activity against E.coli and C.albicans, as well as antitumoral activity against some human and mice cell lines. In addition, it is effective as parasiticidal agent against Leishmania sp. and S.mansoni. It also disrupts negatively charged liposomes in a dose- and temperature-dependent manner and shows toxicity by intraperitoneal route. In contrast to other phospholipase A2-like toxins, this myotoxin does not require fatty acid binding to be active. The sequence is that of Basic phospholipase A2 homolog myotoxin II from Bothrops moojeni (Lance-headed viper).